A 113-amino-acid chain; its full sequence is Hydrogenase maturation factor HypA (113 aa).

His2 contacts Ni(2+). Zn(2+) contacts are provided by Cys73, Cys76, Cys89, and Cys92.

It belongs to the HypA/HybF family.

Functionally, involved in the maturation of [NiFe] hydrogenases. Required for nickel insertion into the metal center of the hydrogenase. This Rhodopseudomonas palustris (strain BisB5) protein is Hydrogenase maturation factor HypA.